A 235-amino-acid chain; its full sequence is Protein Thf1 (235 aa).

Residues 179 to 228 (LNLSSDKLQKDLDLYRSNVDKMGQLLAVIEDALEAERKKREKAKQEVATT) are a coiled coil.

The protein belongs to the THF1 family.

Functionally, may be involved in photosynthetic membrane biogenesis. The sequence is that of Protein Thf1 from Rippkaea orientalis (strain PCC 8801 / RF-1) (Cyanothece sp. (strain PCC 8801)).